Consider the following 86-residue polypeptide: Toxin ICK-18 (86 aa).

Positions 1–19 (MKTIFALVFCCAIAVVVLG) are cleaved as a signal peptide. 4 cysteine pairs are disulfide-bonded: Cys35/Cys49, Cys42/Cys61, Cys48/Cys76, and Cys79/Cys86.

This sequence belongs to the neurotoxin 21 family. In terms of tissue distribution, expressed by the venom gland.

Its subcellular location is the secreted. Its function is as follows. Probable neurotoxin with ion channel impairing activity. In Trittame loki (Brush-footed trapdoor spider), this protein is Toxin ICK-18.